The chain runs to 1434 residues: Pleiotropic drug resistance protein 1 (1434 aa).

The disordered stretch occupies residues Met-1 to Leu-22. One can recognise an ABC transporter 1 domain in the interval Leu-161 to Gln-434. Gly-194–Thr-201 is an ATP binding site. An ABC transmembrane type-2 1 domain is found at Glu-512–Phe-725. Transmembrane regions (helical) follow at residues Phe-530–Phe-550, Gly-563–Ser-583, Ile-618–Phe-638, Phe-649–Val-669, Val-675–Leu-695, Ser-702–Val-722, and Ile-760–Leu-780. The tract at residues Leu-793 to Asn-824 is disordered. A compositionally biased stretch (polar residues) spans Glu-804 to Asn-824. The 253-residue stretch at Ile-837–Pro-1089 folds into the ABC transporter 2 domain. Gly-882–Thr-889 is an ATP binding site. The region spanning Thr-1162–Phe-1376 is the ABC transmembrane type-2 2 domain. Transmembrane regions (helical) follow at residues Tyr-1181–Trp-1201, Tyr-1221–Ile-1241, Ile-1269–Phe-1289, Phe-1296–Met-1316, Val-1326–Ile-1346, Trp-1357–Gly-1377, and Val-1406–Ile-1426.

The protein belongs to the ABC transporter superfamily. ABCG family. PDR (TC 3.A.1.205) subfamily.

It is found in the membrane. May be a general defense protein. The polypeptide is Pleiotropic drug resistance protein 1 (PDR1) (Nicotiana tabacum (Common tobacco)).